The sequence spans 336 residues: 4-aminobenzoate N-oxygenase (336 aa).

Residue Y93 participates in 4-nitrobenzoate binding. Fe cation contacts are provided by E101, E136, H139, and E196. N200 provides a ligand contact to 4-nitrobenzoate. Residues H223, E227, and H230 each contribute to the Fe cation site.

This sequence belongs to the AurF N-oxygenase family. Homodimer. It depends on Fe(2+) as a cofactor.

It catalyses the reaction 4-aminobenzoate + AH2 + 2 O2 = 4-nitrobenzoate + A + 2 H2O. Its pathway is antibiotic biosynthesis. In terms of biological role, involved in the biosynthesis of the polyketide antibiotic aureothin. Catalyzes the oxidation of p-aminobenzoate (pABA) to p-nitrobenzoate (pNBA), an unusual polyketide synthase starter unit. Reaction mechanism involves the generation of a peroxodiiron(III/III) intermediate, which effects the initial oxidation of p-aminobenzoate to p-hydroxylaminobenzoate (Ar-NHOH). Ar-NHOH is then probably directly converted to the fully oxidized p-nitrobenzoate via a four-electron N-oxidation, bypassing the formation of a nitroso compound. This chain is 4-aminobenzoate N-oxygenase, found in Streptomyces thioluteus.